A 725-amino-acid chain; its full sequence is Portal protein (725 aa).

Belongs to the p22likevirus portal protein family. Homododecamer. Interacts with the terminase large subunit; this interaction allows the packaging of viral DNA. Interacts (via C-terminus) with the head-to-tail adapter protein gp4; this interaction participates in the head completion. Interacts with the scaffolding protein; this interaction initiates procapsid assembly, thereby ensuring incorporation of only one portal ring per capsid. Interacts with the capsid protein.

Its subcellular location is the virion. Its function is as follows. Forms the portal vertex of the capsid. This portal plays critical roles in head assembly, genome packaging, neck/tail attachment, and genome ejection. Procapsid assembly may initiate with a nucleation complex composed of portal and scaffolding proteins. The portal protein multimerizes as a single ring-shaped homododecamer arranged around a central channel. Switches upon genome packaging from an asymmetrical conformation in the procapsid (PC-portal) to a symmetrical ring in the mature capsid (MV-portal). This change of conformation may serve as a signal for headful packaging. The sequence is that of Portal protein (1) from Salmonella typhimurium (Bacteriophage P22).